A 321-amino-acid chain; its full sequence is Large ribosomal RNA subunit accumulation protein YCED homolog 1, chloroplastic (321 aa).

The N-terminal 32 residues, methionine 1–serine 32, are a transit peptide targeting the chloroplast.

This sequence belongs to the DUF177 domain family.

It is found in the plastid. It localises to the chloroplast stroma. Its subcellular location is the chloroplast nucleoid. Plays a role in synthesis, processing and/or stability of 23S rRNA. Required for embryogenesis. The chain is Large ribosomal RNA subunit accumulation protein YCED homolog 1, chloroplastic from Arabidopsis thaliana (Mouse-ear cress).